The primary structure comprises 246 residues: RNA polymerase sigma-B factor (246 aa).

The Polymerase core binding motif lies at 25 to 38; that stretch reads DLIQEGNIGLMKAV. A DNA-binding region (H-T-H motif) is located at residues 201–220; it reads LKELGEHFGFSRERARQLEI.

This sequence belongs to the sigma-70 factor family.

Sigma factors are initiation factors that promote the attachment of RNA polymerase to specific initiation sites and are then released. This sigma factor is essential for late-stage differentiation of M.xanthus. This Myxococcus xanthus protein is RNA polymerase sigma-B factor (sigB).